A 481-amino-acid chain; its full sequence is Phospho-2-dehydro-3-deoxyheptonate aldolase (481 aa).

A disordered region spans residues M1 to I22.

Belongs to the class-II DAHP synthase family. In terms of assembly, homodimer. In terms of processing, the N-terminus is blocked.

It carries out the reaction D-erythrose 4-phosphate + phosphoenolpyruvate + H2O = 7-phospho-2-dehydro-3-deoxy-D-arabino-heptonate + phosphate. It participates in metabolic intermediate biosynthesis; chorismate biosynthesis; chorismate from D-erythrose 4-phosphate and phosphoenolpyruvate: step 1/7. The polypeptide is Phospho-2-dehydro-3-deoxyheptonate aldolase (aro-8) (Neurospora crassa (strain ATCC 24698 / 74-OR23-1A / CBS 708.71 / DSM 1257 / FGSC 987)).